A 495-amino-acid chain; its full sequence is N-succinylglutamate 5-semialdehyde dehydrogenase (495 aa).

An NAD(+)-binding site is contributed by 220–225; it reads GSAGTG. Catalysis depends on residues E243 and C277.

Belongs to the aldehyde dehydrogenase family. AstD subfamily.

It catalyses the reaction N-succinyl-L-glutamate 5-semialdehyde + NAD(+) + H2O = N-succinyl-L-glutamate + NADH + 2 H(+). It participates in amino-acid degradation; L-arginine degradation via AST pathway; L-glutamate and succinate from L-arginine: step 4/5. Catalyzes the NAD-dependent reduction of succinylglutamate semialdehyde into succinylglutamate. This chain is N-succinylglutamate 5-semialdehyde dehydrogenase, found in Enterobacter sp. (strain 638).